Reading from the N-terminus, the 212-residue chain is Pyridoxine/pyridoxamine 5'-phosphate oxidase (212 aa).

FMN-binding positions include 61 to 66 (RTVLLK), 76 to 77 (FT), lysine 82, lysine 83, and glutamine 105. Lysine 66 contributes to the substrate binding site. Tyrosine 123, arginine 127, and serine 131 together coordinate substrate. FMN contacts are provided by residues 140-141 (QS) and tryptophan 185. Position 191–193 (191–193 (RLH)) interacts with substrate. Position 195 (arginine 195) interacts with FMN.

It belongs to the pyridoxamine 5'-phosphate oxidase family. In terms of assembly, homodimer. FMN serves as cofactor.

The catalysed reaction is pyridoxamine 5'-phosphate + O2 + H2O = pyridoxal 5'-phosphate + H2O2 + NH4(+). It carries out the reaction pyridoxine 5'-phosphate + O2 = pyridoxal 5'-phosphate + H2O2. Its pathway is cofactor metabolism; pyridoxal 5'-phosphate salvage; pyridoxal 5'-phosphate from pyridoxamine 5'-phosphate: step 1/1. It participates in cofactor metabolism; pyridoxal 5'-phosphate salvage; pyridoxal 5'-phosphate from pyridoxine 5'-phosphate: step 1/1. In terms of biological role, catalyzes the oxidation of either pyridoxine 5'-phosphate (PNP) or pyridoxamine 5'-phosphate (PMP) into pyridoxal 5'-phosphate (PLP). The protein is Pyridoxine/pyridoxamine 5'-phosphate oxidase of Vesicomyosocius okutanii subsp. Calyptogena okutanii (strain HA).